The sequence spans 218 residues: GCN5-related N-acetyltransferase 9 (218 aa).

Residues 36–183 enclose the N-acetyltransferase domain; sequence SALLEATGSE…KEVTLEYPVT (148 aa). Acetyl-CoA is bound by residues 112–114, 120–125, 152–154, and Phe159; these read MIA, GKGLGK, and NTA.

Belongs to the acetyltransferase family. GNAT subfamily. In terms of assembly, oligomer. In terms of tissue distribution, expressed throughout the plant.

The protein localises to the cytoplasm. It is found in the nucleus. The enzyme catalyses an N-terminal L-alpha-aminoacyl-[protein] + acetyl-CoA = N-terminal N(alpha)-acetyl-L-alpha-aminoacyl-[protein] + CoA + H(+). It catalyses the reaction L-lysyl-[protein] + acetyl-CoA = N(6)-acetyl-L-lysyl-[protein] + CoA + H(+). Functionally, probable protein acetyltransferase with dual specificity triggering both N-alpha-acetylation (NTA) and epsilon-lysine acetylation (KA). The chain is GCN5-related N-acetyltransferase 9 from Arabidopsis thaliana (Mouse-ear cress).